The following is a 161-amino-acid chain: Putative TRAP transporter small permease protein HI_1030 (161 aa).

4 helical membrane-spanning segments follow: residues 13–33, 51–71, 86–106, and 135–155; these read LEILCISILALMSILVFLNVV, YLFIWLAFLGAVLAFNENQHV, AILKFITDMMMLICCYLIIEG, and IAGILVSAILITRLISTIFFI.

The protein belongs to the TRAP transporter small permease family.

It is found in the cell inner membrane. This Haemophilus influenzae (strain ATCC 51907 / DSM 11121 / KW20 / Rd) protein is Putative TRAP transporter small permease protein HI_1030.